Reading from the N-terminus, the 361-residue chain is Ankyrin repeat domain-containing protein 16 (361 aa).

ANK repeat units lie at residues 36-66, 70-99, 103-132, 136-165, 170-200, 204-233, 238-268, 273-302, and 306-335; these read AGDTLLHCAARHGRQDILAYLVEAWSMDIEA, DYKRPLHEAASMGHRDCVRYLLGRGAVVDS, ADWTPLMMACTRKNLDVIQDLVEHGANPLL, DGWNSFHIASREGHPVILRYLLTVCPDAWK, IRRTPLHTAAMHGCLEAVQVLLERCHYEPDC, CGVTPFMDAIQCGHVSIAKLLLEQHKACSS, MGAQALHRAAVTGQDEAIRFLVCGLGIDVDV, SQLTALHYAAKEGQTNTVQTLLSLGADINS, and RNRSVLHLACAGQHVACTRLLLQSGLKDSE.

In terms of assembly, interacts with AARS; the interaction is direct. In terms of tissue distribution, widely expressed in brain (at protein level).

The protein localises to the cytoplasm. The protein resides in the nucleus. Required to prevent the misactivation of serine (Ser) with tRNA(Ala) by promoting the hydrolysis of Ser-mischarged tRNA(Ala), thereby playing a role in translational fidelity. Binds directly to the catalytic domain of AARS/AlaRS and captures Ser that is misactivated by AARS/AlaRS, preventing the charging of Ser adenylates to tRNA(Ala) and precluding Ser misincorporation in nascent peptides. This chain is Ankyrin repeat domain-containing protein 16, found in Mus musculus (Mouse).